Consider the following 436-residue polypeptide: Protein VHS2 (436 aa).

The segment at Met-1 to Ser-34 is disordered. The span at Asn-7 to Asp-21 shows a compositional bias: basic and acidic residues. Residues Ser-53, Ser-61, Ser-102, and Ser-172 each carry the phosphoserine modification. 4 disordered regions span residues Arg-165 to Ser-195, Asn-211 to Phe-266, Asn-282 to Asn-360, and Asn-389 to Lys-436. Positions Arg-171–Ser-183 are enriched in polar residues. Low complexity-rich tracts occupy residues Asn-211–Asn-226, Ser-238–Pro-261, and Asn-282–Ser-299. A phosphoserine mark is found at Ser-299, Ser-301, Ser-303, and Ser-325. Positions Arg-300–Gln-312 are enriched in polar residues. A compositionally biased stretch (low complexity) spans Thr-401 to Lys-436.

It to yeast MFL3.

It localises to the cytoplasm. Can suppress the synthetic lethality of the hal3 sit4 double mutation when overexpressed, suggesting that it is involved in the G1-S transition. The polypeptide is Protein VHS2 (VHS2) (Saccharomyces cerevisiae (strain ATCC 204508 / S288c) (Baker's yeast)).